The chain runs to 148 residues: Large ribosomal subunit protein uL15 (148 aa).

The span at 1–30 (MPSRLRKTRKLRGHVSHGHGRIGKHRKHPG) shows a compositional bias: basic residues. A disordered region spans residues 1 to 38 (MPSRLRKTRKLRGHVSHGHGRIGKHRKHPGGRGNAGGL). (3S)-3-hydroxyhistidine is present on His-39. 2 positions are modified to N6-acetyllysine: Lys-47 and Lys-55. The residue at position 68 (Ser-68) is a Phosphoserine. N6-acetyllysine is present on Lys-110.

This sequence belongs to the universal ribosomal protein uL15 family. As to quaternary structure, component of the large ribosomal subunit. In terms of processing, hydroxylated on His-39 by MINA.

Its subcellular location is the cytoplasm. Functionally, component of the large ribosomal subunit. The ribosome is a large ribonucleoprotein complex responsible for the synthesis of proteins in the cell. The chain is Large ribosomal subunit protein uL15 (RPL27A) from Homo sapiens (Human).